The primary structure comprises 1068 residues: MAAAYLDPNLNHNPSTNAKSRLSTGMERSPGAIERVLRVFHYFESNNEPATWSSNIRHGDATDVRGIIQKIVDSHKVKNVASYGLRLSHLHSEEVHWLHPDIGVSHIREKYEQSHPPEEWKYELRIRYLPKGFVNQFTEDKPTLNFFYQQVKNDYMSEIADQVDQEIALKLGCLEIRRSYGEMRGNALEKKSNYEVLEKDVGLKRFFPKSLLDSVKAKTLRKLIQQTFRQFANLNREESILKFFEILSPVYRYDKECFKCALGSSWIISVELAIGPEEGISYLTDKGSNPTHLADFTQVQTIQYSSSEDKDRKGMLQLKIAGAPEPLTVTAPSLTIAENMADLIDGYCRLVSGASESFIIRPQKEGERALPSIPKLANNEKHGVRPHAVSVSDEFSGDETDDYAEIIDEEDTYTMPSKSYGLDEAGDYEIQRDRIELGRCIGEGQFGDVHQGVYMSPENPAMAVAIKTCKNCTSDSVREKFLQEALTMRQFDHPHIVKLIGVITENPVWIIMELCTLGELRSFLQVRKYSLDLASLILYSYQLSTALAYLESKRFVHRDIAARNVLVSSSDCVKLGDFGLSRYMEDSTYYKASKGKLPIKWMAPESINFRRFTSASDVWMFGVCMWEILMYGVKPFQGVKNNDVIGRIENGERLPMPPNCPPTLYSLMTKCWAYDPSRRPRFTELKAQLSTILEEEKLQQEERMRMESRRQVTVSWDSGGSDEAPPKPSRPGYPSPRSSEGFFPSPQHMMQPNHYQVSGFSVAHGIPSMSGNMYPGQASVLDHMDSWNHRTPDINMWQPSMEDSGPMDMRSLAQVLPTHLMEERLIRQQQEMEEDQRWLEKEERFLKPDVRLSRGSVDHVDGNIQCPAGNQHIYQPVGKPDHVAPPKKPPRPGAPSHLGNLPAHNSPVDGYNEGVKPWRIQPQEISPPPTANLDRTNDKVYENVTGLVKAVIEMSSRIQPAPPEEYVPMVKGVGLALRTLLATVDETIPVLPASTHREIEMAQKLLNSDLAELINKMKLAQQYVMTSLQQEYKKQMLTAAHALAVDAKNLLDVIDQARLKIISHSRPH.

Positions 1 to 26 (MAAAYLDPNLNHNPSTNAKSRLSTGM) are disordered. The segment covering 10 to 23 (LNHNPSTNAKSRLS) has biased composition (polar residues). An FERM domain is found at 35 to 355 (RVLRVFHYFE…GYCRLVSGAS (321 aa)). Phosphotyrosine occurs at positions 403 and 413. Residues 435-693 (IELGRCIGEG…ELKAQLSTIL (259 aa)) enclose the Protein kinase domain. ATP-binding positions include 441-447 (IGEGQFG), Lys467, and 513-515 (ELC). Asp559 (proton acceptor) is an active-site residue. Phosphotyrosine; by autocatalysis occurs at positions 589 and 590. Basic and acidic residues predominate over residues 699-710 (QQEERMRMESRR). Disordered regions lie at residues 699–750 (QQEE…QHMM) and 869–912 (GNQH…DGYN). Phosphotyrosine occurs at positions 874 and 941.

This sequence belongs to the protein kinase superfamily. Tyr protein kinase family. FAK subfamily. Post-translationally, phosphorylated on tyrosine residues; phosphorylated kinase is first detected during gastrulation, suggesting that tyrosine phosphorylation is developmentally regulated.

The protein localises to the cell junction. It localises to the focal adhesion. The protein resides in the cell membrane. Its subcellular location is the cytoplasm. It is found in the cytoskeleton. The protein localises to the cilium basal body. It carries out the reaction L-tyrosyl-[protein] + ATP = O-phospho-L-tyrosyl-[protein] + ADP + H(+). Its function is as follows. Non-receptor protein-tyrosine kinase implicated in signaling pathways involved in cell motility, proliferation and apoptosis. Activated by tyrosine-phosphorylation in response to either integrin clustering induced by cell adhesion or antibody cross-linking, or via G-protein coupled receptor (GPCR) occupancy by ligands such as bombesin or lysophosphatidic acid, or via LDL receptor occupancy. Microtubule-induced dephosphorylation at Tyr-397 is crucial for the induction of focal adhesion disassembly. The polypeptide is Focal adhesion kinase 1 (ptk2) (Xenopus laevis (African clawed frog)).